Reading from the N-terminus, the 607-residue chain is Albumin (607 aa).

The signal sequence occupies residues 1-18; it reads MKWVTFVSLLFLFSSAYS. A propeptide spanning residues 19 to 24 is cleaved from the precursor; that stretch reads RGVLRR. 3 consecutive Albumin domains span residues 19–209, 210–402, and 403–600; these read RGVL…DALK, ERIL…QFTP, and LVEE…KLVA. His-27 provides a ligand contact to Cu cation. Ser-29 carries the post-translational modification Phosphoserine. Residues Glu-30 and Asp-37 each contribute to the Ca(2+) site. Cys-77 and Cys-86 are oxidised to a cystine. Residues Ser-82 and Ser-89 each carry the phosphoserine modification. His-91 contacts Zn(2+). Intrachain disulfides connect Cys-99-Cys-115, Cys-114-Cys-125, Cys-147-Cys-192, Cys-191-Cys-200, Cys-223-Cys-269, and Cys-268-Cys-276. Residue Thr-107 is modified to Phosphothreonine. A Ca(2+)-binding site is contributed by Glu-267. Positions 270 and 272 each coordinate Zn(2+). Residues Asp-272, Glu-275, Asp-278, and Asp-282 each contribute to the Ca(2+) site. Cystine bridges form between Cys-288/Cys-302, Cys-301/Cys-312, Cys-339/Cys-384, Cys-383/Cys-392, Cys-415/Cys-461, Cys-460/Cys-471, Cys-484/Cys-500, and Cys-499/Cys-510. Ser-442 is modified (phosphoserine). Phosphothreonine occurs at positions 443 and 445. Ser-512 is modified (phosphoserine). 2 disulfides stabilise this stretch: Cys-537–Cys-582 and Cys-581–Cys-590. N6-methyllysine is present on Lys-557. Thr-569 bears the Phosphothreonine mark. Lys-587 is modified (N6-succinyllysine).

The protein belongs to the ALB/AFP/VDB family. In terms of assembly, interacts with FCGRT; this interaction regulates ALB homeostasis. Interacts with TASOR. In plasma, occurs in a covalently-linked complex with chromophore-bound alpha-1-microglobulin; this interaction does not prevent fatty acid binding to ALB. Phosphorylated by FAM20C in the extracellular medium. As to expression, plasma.

It is found in the secreted. Functionally, binds water, Ca(2+), Na(+), K(+), fatty acids, hormones, bilirubin and drugs. Its main function is the regulation of the colloidal osmotic pressure of blood. Major zinc transporter in plasma, typically binds about 80% of all plasma zinc. Major calcium and magnesium transporter in plasma, binds approximately 45% of circulating calcium and magnesium in plasma. Potentially has more than two calcium-binding sites and might additionally bind calcium in a non-specific manner. The shared binding site between zinc and calcium at residue Asp-272 suggests a crosstalk between zinc and calcium transport in the blood. The rank order of affinity is zinc &gt; calcium &gt; magnesium. Binds to the bacterial siderophore enterobactin and inhibits enterobactin-mediated iron uptake of E.coli from ferric transferrin, and may thereby limit the utilization of iron and growth of enteric bacteria such as E.coli. Does not prevent iron uptake by the bacterial siderophore aerobactin. In Equus caballus (Horse), this protein is Albumin (ALB).